The chain runs to 108 residues: Parvalbumin beta (108 aa).

2 consecutive EF-hand domains span residues Lys38 to Ser73 and Leu77 to Ser108. 11 residues coordinate Ca(2+): Asp51, Asp53, Ser55, Tyr57, Glu59, Glu62, Asp90, Asp92, Asp94, Lys96, and Glu101.

Belongs to the parvalbumin family.

In muscle, parvalbumin is thought to be involved in relaxation after contraction. It binds two calcium ions. The polypeptide is Parvalbumin beta (Amphiuma means (Salamander)).